Reading from the N-terminus, the 634-residue chain is Bacteriophytochrome (634 aa).

Biliverdin IXalpha is bound at residue C13. The 106-residue stretch at 13–118 folds into the PAS 1 domain; that stretch reads CAREPIHIPG…YPQQWLVEME (106 aa). A photosensory core domain region spans residues 13-514; the sequence is CAREPIHIPG…ELMERKRFQQ (502 aa). Positions 151 to 305 constitute a GAF domain; it reads RVAKGLRSLI…VTDAVARTLA (155 aa). A phytochrome-specific (PHY) region spans residues 325–508; that stretch reads TVREKLITDF…SLRVLIELME (184 aa). Residues 452–480 form a tongue domain region; the sequence is WAGNPQLAKLEDIPNSRLSPRKSFDLWQQ. The region spanning 515-590 is the PAS 2 domain; sequence DFTLLEASLS…ELLQDALRNG (76 aa). The PAS9, output module, not required to bind biliverdin IX-alpha, required for dimerization stretch occupies residues 515–634; that stretch reads DFTLLEASLS…HWLLQLRDPE (120 aa).

This sequence in the N-terminal section; belongs to the phytochrome family. Forms head-to-head homodimers. Post-translationally, contains one covalently linked biliverdin IX-alpha chromophore; present in the crystal structure as a mixture of Pr and Meta-R configurations.

Photoreceptor which exists in two forms that are reversibly interconvertible by light: far-red light (733 nm) converts protein to the red-absorbing (Pr) form, while red light (630 nm) partly converts the protein to the far-red-absorbing (Pfr) form. Regulates virulence of X.campestris pv. campestris on its host plants, perhaps by fine-tuning expression to ambient light levels and/or spatial cues. The Pr form may sense light and partially inhibit virulence; in the dark (Pfr form) biofilm and xanathan production rise and bacteria are more virulent. Strains overexpressing this protein have significantly decreased amounts of extracellular beta-1,4-endoglucanase, produce less xanthin and have decreased transcription of genes involved in virulence such as endoglucanases, type 2 secretion systems, xanthan production and flagellar-dependent motility. This Xanthomonas campestris pv. campestris (strain 8004) protein is Bacteriophytochrome (bphP).